A 783-amino-acid polypeptide reads, in one-letter code: NADH-quinone oxidoreductase subunit 3 (783 aa).

Residues 1–99 (MVRVKVNDRI…GMVVDTLSDV (99 aa)) form the 2Fe-2S ferredoxin-type domain. Residues cysteine 34, cysteine 45, cysteine 48, and cysteine 83 each contribute to the [2Fe-2S] cluster site. In terms of domain architecture, 4Fe-4S His(Cys)3-ligated-type spans 99 to 138 (VVREAQAGMVEFTLLNHPLDCPTCDKGGACELQDRTVEYG). 12 residues coordinate [4Fe-4S] cluster: histidine 115, cysteine 119, cysteine 122, cysteine 128, cysteine 181, cysteine 184, cysteine 187, cysteine 230, cysteine 256, cysteine 259, cysteine 263, and cysteine 291. The 57-residue stretch at 249-305 (MEETPTTCALCPVGCGITADTRSGELLRIRAREVPEVNEIWICDAGRFGHEWADQNR) folds into the 4Fe-4S Mo/W bis-MGD-type domain.

It belongs to the complex I 75 kDa subunit family. NDH-1 is composed of 15 different subunits, Nqo1 to Nqo15. The complex has a L-shaped structure, with the hydrophobic arm (subunits Nqo7, Nqo8 and Nqo10 to Nqo14) embedded in the membrane and the hydrophilic peripheral arm (subunits Nqo1 to Nqo6, Nqo9 and Nqo15) protruding into the bacterial cytoplasm. The hydrophilic domain contains all the redox centers. [2Fe-2S] cluster serves as cofactor. It depends on [4Fe-4S] cluster as a cofactor.

Its subcellular location is the cell membrane. The enzyme catalyses a quinone + NADH + 5 H(+)(in) = a quinol + NAD(+) + 4 H(+)(out). NDH-1 shuttles electrons from NADH, via FMN and iron-sulfur (Fe-S) centers, to quinones in the respiratory chain. The immediate electron acceptor for the enzyme in this species is menaquinone. Couples the redox reaction to proton translocation (for every two electrons transferred, four hydrogen ions are translocated across the cytoplasmic membrane), and thus conserves the redox energy in a proton gradient required for the synthesis of ATP. The sequence is that of NADH-quinone oxidoreductase subunit 3 (nqo3) from Thermus thermophilus (strain ATCC 27634 / DSM 579 / HB8).